A 547-amino-acid polypeptide reads, in one-letter code: Threonylcarbamoyladenosine tRNA methylthiotransferase (547 aa).

Residues 30 to 51 form a disordered region; that stretch reads ARKSVVPRARKHKQETGEQMQT. An MTTase N-terminal domain is found at 59–167; the sequence is QKVWLKTWGC…VVEVVDEAIK (109 aa). Residues cysteine 68, cysteine 104, cysteine 133, cysteine 209, cysteine 213, and cysteine 216 each contribute to the [4Fe-4S] cluster site. The 232-residue stretch at 195-426 folds into the Radical SAM core domain; it reads RKNPLIEIIS…ALFHSYRPYD (232 aa). Residues 426–488 form the TRAM domain; sequence DHKMGEQQQV…KHYMKGRPLE (63 aa). The chain crosses the membrane as a helical span at residues 527–547; the sequence is ILAVVLLLSAVLLALLMEKLL.

The protein belongs to the methylthiotransferase family. CDKAL1 subfamily. Requires [4Fe-4S] cluster as cofactor.

The protein localises to the endoplasmic reticulum membrane. It catalyses the reaction N(6)-L-threonylcarbamoyladenosine(37) in tRNA + (sulfur carrier)-SH + AH2 + 2 S-adenosyl-L-methionine = 2-methylsulfanyl-N(6)-L-threonylcarbamoyladenosine(37) in tRNA + (sulfur carrier)-H + 5'-deoxyadenosine + L-methionine + A + S-adenosyl-L-homocysteine + 2 H(+). Functionally, catalyzes the methylthiolation of N6-threonylcarbamoyladenosine (t(6)A), leading to the formation of 2-methylthio-N6-threonylcarbamoyladenosine (ms(2)t(6)A) at position 37 in tRNAs that read codons beginning with adenine. This is Threonylcarbamoyladenosine tRNA methylthiotransferase (cdkal1) from Danio rerio (Zebrafish).